Reading from the N-terminus, the 799-residue chain is High affinity nerve growth factor receptor (799 aa).

The N-terminal stretch at 1-32 (MLRGQRHGQLGWHRPAAGLGGLVTSLMLACAC) is a signal peptide. Over 33–418 (AASCRETCCP…DPVEKKDETP (386 aa)) the chain is Extracellular. Intrachain disulfides connect Cys-36–Cys-41 and Cys-40–Cys-50. A glycan (N-linked (GlcNAc...) asparagine) is linked at Asn-67. 2 LRR repeats span residues 90 to 113 (LGEL…AFHF) and 116 to 137 (RLSH…TVQG). 10 N-linked (GlcNAc...) asparagine glycosylation sites follow: Asn-121, Asn-190, Asn-204, Asn-255, Asn-264, Asn-320, Asn-325, Asn-341, Asn-361, and Asn-404. An LRRCT domain is found at 148–219 (NPLHCSCALL…GDDVFLQCQV (72 aa)). Cys-154 and Cys-193 are disulfide-bonded. Ig-like C2-type domains lie at 196 to 285 (PSVK…VSVS) and 295 to 368 (AVEQ…LAAN). Intrachain disulfides connect Cys-217–Cys-267 and Cys-302–Cys-348. A helical membrane pass occupies residues 419-442 (FGVSVAVGLAVSAALFLSALLLVL). The Cytoplasmic segment spans residues 443–799 (NKCGQRSKFG…APPSYLDVLG (357 aa)). An interaction with SQSTM1 region spans residues 472–493 (MTLGGSSLSPTEGKGSGLQGHI). Residue Tyr-499 is modified to Phosphotyrosine; by autocatalysis. In terms of domain architecture, Protein kinase spans 513 to 784 (IILKWELGEG…LSMKDVHARL (272 aa)). Residues 519–527 (LGEGAFGKV) and Lys-547 each bind ATP. Asp-653 serves as the catalytic Proton acceptor. Residues Tyr-679, Tyr-683, Tyr-684, and Tyr-794 each carry the phosphotyrosine; by autocatalysis modification.

This sequence belongs to the protein kinase superfamily. Tyr protein kinase family. Insulin receptor subfamily. Exists in a dynamic equilibrium between monomeric (low affinity) and dimeric (high affinity) structures. Homodimerization is induced by binding of a NGF dimer. Found in a complex, at least composed of KIDINS220, MAGI2, NTRK1 and RAPGEF2; the complex is mainly formed at late endosomes in a nerve growth factor (NGF)-dependent manner. Interacts with RAPGEF2; the interaction is strengthened after NGF stimulation. Interacts with SQSTM1; bridges NTRK1 to NGFR. Forms a ternary complex with NGFR and KIDINS220; this complex is affected by the expression levels of KIDINS220 and an increase in KIDINS220 expression leads to a decreased association of NGFR and NTRK1. Interacts (phosphorylated upon activation by NGF) with SHC1; mediates SHC1 phosphorylation and activation. Interacts (phosphorylated upon activation by NGF) with PLCG1; mediates PLCG1 phosphorylation and activation. Interacts (phosphorylated) with SH2B1 and SH2B2. Interacts with GRB2. Interacts with PIK3R1. Interacts with FRS2. Interacts with SORT1; may regulate NTRK1 anterograde axonal transport. Interacts with SH2D1A; regulates NTRK1. Interacts with NRADD. Interacts with RAB7A. Interacts with PTPRS. Interacts with USP36; USP36 does not deubiquitinate NTRK1. Interacts with GGA3. Interacts with TSPAN1; this interaction promotes NTRK1 stability. Ligand-mediated autophosphorylation. Interaction with SQSTM1 is phosphotyrosine-dependent. Autophosphorylation at Tyr-499 mediates interaction and phosphorylation of SHC1. Post-translationally, N-glycosylated. In terms of processing, ubiquitinated. Undergoes polyubiquitination upon activation; regulated by NGFR. Ubiquitination by NEDD4L leads to degradation. Ubiquitination regulates the internalization of the receptor. Isoform Trka-II is primarily expressed in neuronal cells; isoform Trka-I is found in non-neuronal tissues.

The protein resides in the cell membrane. Its subcellular location is the early endosome membrane. It is found in the late endosome membrane. It localises to the recycling endosome membrane. It catalyses the reaction L-tyrosyl-[protein] + ATP = O-phospho-L-tyrosyl-[protein] + ADP + H(+). With respect to regulation, the pro-survival signaling effect of NTRK1 in neurons requires its endocytosis into signaling early endosomes and its retrograde axonal transport. This is regulated by different proteins including CFL1, RAC1 and SORT1. NTF3 is unable to induce this signaling probably due to the lability of the NTF3-NTRK1 complex in endosomes. SH2D1A inhibits the autophosphorylation of the receptor, and alters the recruitment and activation of downstream effectors and signaling cascades. Regulated by NGFR. Receptor tyrosine kinase involved in the development and the maturation of the central and peripheral nervous systems through regulation of proliferation, differentiation and survival of sympathetic and nervous neurons. High affinity receptor for NGF which is its primary ligand. Can also bind and be activated by NTF3/neurotrophin-3. However, NTF3 only supports axonal extension through NTRK1 but has no effect on neuron survival. Upon dimeric NGF ligand-binding, undergoes homodimerization, autophosphorylation and activation. Recruits, phosphorylates and/or activates several downstream effectors including SHC1, FRS2, SH2B1, SH2B2 and PLCG1 that regulate distinct overlapping signaling cascades driving cell survival and differentiation. Through SHC1 and FRS2 activates a GRB2-Ras-MAPK cascade that regulates cell differentiation and survival. Through PLCG1 controls NF-Kappa-B activation and the transcription of genes involved in cell survival. Through SHC1 and SH2B1 controls a Ras-PI3 kinase-AKT1 signaling cascade that is also regulating survival. In absence of ligand and activation, may promote cell death, making the survival of neurons dependent on trophic factors. The protein is High affinity nerve growth factor receptor (Ntrk1) of Rattus norvegicus (Rat).